Consider the following 171-residue polypeptide: MKKLLFSTFLLVLGSTSAAHANLGYVNLKRCLEESDLGKKETEELEAMKQQFVKNAEKIEEELTSIYNKLQDEDYMESLSDSASEELRKKFEDLSGEYNAYQSQYYQSINQSNVKRIQKLIQEVKIAAESVRSKEKLEAILNEEAVLAIAPGTDKTTEIIAILNESFKKQN.

Positions 1 to 21 are cleaved as a signal peptide; the sequence is MKKLLFSTFLLVLGSTSAAHA.

Belongs to the Skp family.

This is Skp-like protein from Chlamydia pneumoniae (Chlamydophila pneumoniae).